The primary structure comprises 315 residues: Archaeosortase A (315 aa).

7 consecutive transmembrane segments (helical) span residues Val-12–Ala-32, Ala-47–Val-67, Thr-74–Gly-94, Val-173–Val-193, Ile-204–Leu-224, Gly-227–Thr-247, and Val-260–Trp-280. Cys-177 serves as the catalytic Acyl-thioester intermediate. The active-site Proton donor is the Arg-218.

The protein belongs to the exosortase/archaeosortase family. Archaeosortase A subfamily.

It is found in the cell membrane. Its function is as follows. Transpeptidase that recognizes and modifies its substrate by proteolytic cleavage of a sorting signal. Following cleavage, a covalent intermediate is formed via a thioester bond between the archaeosortase and its substrate, which is then transferred and covalently attached to the cell membrane. This Natronomonas pharaonis (strain ATCC 35678 / DSM 2160 / CIP 103997 / JCM 8858 / NBRC 14720 / NCIMB 2260 / Gabara) (Halobacterium pharaonis) protein is Archaeosortase A.